An 820-amino-acid chain; its full sequence is Phenylalanine--tRNA ligase beta subunit (820 aa).

A tRNA-binding domain is found at 39-150 (PAPVGGVLLV…GTAAPGTPLR (112 aa)). Residues 435–510 (EVPQTITTTG…RLHGFTELPE (76 aa)) enclose the B5 domain. Asp-488, Asp-494, Glu-497, and Glu-498 together coordinate Mg(2+). One can recognise an FDX-ACB domain in the interval 727–818 (SRAPAAWRDL…AVKARGWAIR (92 aa)).

This sequence belongs to the phenylalanyl-tRNA synthetase beta subunit family. Type 1 subfamily. In terms of assembly, tetramer of two alpha and two beta subunits. The cofactor is Mg(2+).

The protein resides in the cytoplasm. It carries out the reaction tRNA(Phe) + L-phenylalanine + ATP = L-phenylalanyl-tRNA(Phe) + AMP + diphosphate + H(+). This is Phenylalanine--tRNA ligase beta subunit (pheT) from Deinococcus radiodurans (strain ATCC 13939 / DSM 20539 / JCM 16871 / CCUG 27074 / LMG 4051 / NBRC 15346 / NCIMB 9279 / VKM B-1422 / R1).